Reading from the N-terminus, the 428-residue chain is Protein CLP1 homolog (428 aa).

Residues Glu-22, Lys-63, and 127–132 (DVGKST) each bind ATP.

The protein belongs to the Clp1 family. Clp1 subfamily.

The protein localises to the nucleus. Functionally, required for endonucleolytic cleavage during polyadenylation-dependent pre-mRNA 3'-end formation. The chain is Protein CLP1 homolog from Nematostella vectensis (Starlet sea anemone).